The sequence spans 148 residues: UPF0756 membrane protein YeaL (148 aa).

A run of 4 helical transmembrane segments spans residues 14 to 34 (ALGFISHNTTVAVSILVLIIV), 51 to 71 (LSIGIIILTIGVMAPIASGTL), 86 to 106 (LVAIAVGVIVSWLGGRGVTLM), and 121 to 141 (VLGVALFRGVPVGPLIAAGLV).

Belongs to the UPF0756 family.

The protein localises to the cell membrane. The polypeptide is UPF0756 membrane protein YeaL (Escherichia coli (strain B / REL606)).